The primary structure comprises 568 residues: Kelch-like protein 12 (568 aa).

The region spanning 33–100 (CDVTLRVEQK…VYTETVHVTV (68 aa)) is the BTB domain. Positions 135–236 (CLGIRDFAET…LTPRYITDVI (102 aa)) constitute a BACK domain. 6 Kelch repeats span residues 282–329 (VLLV…SLHD), 331–379 (IYVI…TLGD), 380–426 (MIYV…VASG), 427–473 (VIYC…LLND), 475–520 (IYVV…VLRG), and 522–567 (LYAI…VLRE). The tract at residues 405 to 568 (QWSMLGDMQT…DAGVCVLREK (164 aa)) is interaction with DVL3.

As to quaternary structure, component of the BCR(KLHL12) E3 ubiquitin ligase complex, at least composed of CUL3 and KLHL12 and RBX1. This complex interacts with DVL3 upon activation of the Wnt signaling pathway by WNT3A. Interacts with DRD4, KLHL2 and SEC31A. Interacts with PEF1 and PDCD6/ALG-2; interaction takes place in response to cytosolic calcium increase and leads to bridge together the BCR(KLHL12) complex and SEC31 (SEC31A or SEC31B). Post-translationally, ubiquitinated by the SCF(FBXL17) complex, leading to its degradation by the proteasome: ubiquitination by the SCF(FBXL17) complex takes place when aberrant BTB domain dimers are formed. Ubiquitously expressed. Highly expressed in testis and at lower levels in the submandibular salivary gland.

The protein resides in the cytoplasmic vesicle. It localises to the COPII-coated vesicle. Its pathway is protein modification; protein ubiquitination. Functionally, substrate-specific adapter of a BCR (BTB-CUL3-RBX1) E3 ubiquitin ligase complex that acts as a negative regulator of Wnt signaling pathway and ER-Golgi transport. The BCR(KLHL12) complex is involved in ER-Golgi transport by regulating the size of COPII coats, thereby playing a key role in collagen export, which is required for embryonic stem (ES) cells division: BCR(KLHL12) acts by mediating monoubiquitination of SEC31 (SEC31A or SEC31B). The BCR(KLHL12) complex is also involved in neural crest specification: in response to cytosolic calcium increase, interacts with the heterodimer formed with PEF1 and PDCD6/ALG-2, leading to bridge together the BCR(KLHL12) complex and SEC31 (SEC31A or SEC31B), promoting monoubiquitination of SEC31 and subsequent collagen export. As part of the BCR(KLHL12) complex, also acts as a negative regulator of the Wnt signaling pathway by mediating ubiquitination and subsequent proteolysis of DVL3. The BCR(KLHL12) complex also mediates polyubiquitination of DRD4 and PEF1, without leading to degradation of these proteins. The chain is Kelch-like protein 12 (KLHL12) from Homo sapiens (Human).